The chain runs to 208 residues: Small ribosomal subunit protein uS4 (208 aa).

Positions 98 to 168 (RRLDNVVFRL…DSLDTVVRRG (71 aa)) constitute an S4 RNA-binding domain.

The protein belongs to the universal ribosomal protein uS4 family. As to quaternary structure, part of the 30S ribosomal subunit. Contacts protein S5. The interaction surface between S4 and S5 is involved in control of translational fidelity.

Its function is as follows. One of the primary rRNA binding proteins, it binds directly to 16S rRNA where it nucleates assembly of the body of the 30S subunit. Functionally, with S5 and S12 plays an important role in translational accuracy. This chain is Small ribosomal subunit protein uS4, found in Desulforapulum autotrophicum (strain ATCC 43914 / DSM 3382 / VKM B-1955 / HRM2) (Desulfobacterium autotrophicum).